The sequence spans 523 residues: UDP-glucuronosyltransferase 3A2 (523 aa).

An N-terminal signal peptide occupies residues 1-22; sequence MAAHRRWLLMSFLFLEVILLEA. The Extracellular segment spans residues 23–487; that stretch reads AKILTISTLS…QPWHEQYMLD (465 aa). N52 carries an N-linked (GlcNAc...) asparagine glycan. A helical membrane pass occupies residues 488–508; that stretch reads VFLFLLGLMLGTLWLSVKVLV. Over 509–523 the chain is Cytoplasmic; the sequence is AVTRYLSIATKVKEA.

The protein belongs to the UDP-glycosyltransferase family. As to expression, highly expressed in kidney, while it is expressed at low levels in liver. Not detected in other tissues examined.

It is found in the membrane. The catalysed reaction is glucuronate acceptor + UDP-alpha-D-glucuronate = acceptor beta-D-glucuronoside + UDP + H(+). Functionally, UDP-glucuronosyltransferases catalyze phase II biotransformation reactions in which lipophilic substrates are conjugated with glucuronic acid to increase water solubility and enhance excretion. They are of major importance in the conjugation and subsequent elimination of potentially toxic xenobiotics and endogenous compounds. In Mus musculus (Mouse), this protein is UDP-glucuronosyltransferase 3A2 (Ugt3a2).